The sequence spans 827 residues: Disintegrin and metalloproteinase domain-containing protein 17 (827 aa).

Residues 1-17 (MRQRLLFLTTLVPFVLA) form the signal peptide. Residues 18–214 (PRPPEEPGSG…SEEFVRRVKR (197 aa)) constitute a propeptide that is removed on maturation. A glycan (N-linked (GlcNAc...) asparagine) is linked at N157. Positions 182 to 189 (KVCGYLNA) match the Cysteine switch motif. C184 is a binding site for Zn(2+). Topologically, residues 215–671 (RAEPNPLKNT…NTFGKFLADN (457 aa)) are extracellular. The Peptidase M12B domain maps to 223–474 (NTCKLLVVAD…KAQECFQERS (252 aa)). Disulfide bonds link C225-C333, C365-C469, and C423-C453. N264 carries N-linked (GlcNAc...) asparagine glycosylation. H405 provides a ligand contact to Zn(2+). The active site involves E406. 2 residues coordinate Zn(2+): H409 and H415. 4 N-linked (GlcNAc...) asparagine glycosylation sites follow: N452, N498, N539, and N551. One can recognise a Disintegrin domain in the interval 475–563 (NKVCGNSRVD…ECPPPGDAED (89 aa)). Intrachain disulfides connect C534/C555, C573/C582, C578/C591, and C593/C600. The segment at 603–671 (CCRNLSGPCV…NTFGKFLADN (69 aa)) is crambin-like. N-linked (GlcNAc...) asparagine glycosylation occurs at N606. Residues 672–692 (IVGSVLVFSLIFWIPFSILVH) form a helical membrane-spanning segment. At 693–827 (CVDKKLDKQY…SRVDSKETEC (135 aa)) the chain is on the cytoplasmic side. The short motif at 731–738 (PAPQTPGR) is the SH3-binding element. T735 bears the Phosphothreonine; by MAPK14 mark. The residue at position 764 (T764) is a Phosphothreonine. The interval 766 to 827 (QEDPSTDSHV…SRVDSKETEC (62 aa)) is disordered. S770 bears the Phosphoserine mark. Basic and acidic residues-rich tracts occupy residues 771–784 (TDSH…EKDP), 794–810 (SFED…EKAA), and 818–827 (SRVDSKETEC). Phosphoserine occurs at positions 794 and 822.

Interacts with MAD2L1, MAPK14 and MUC1. Interacts with iRhom1/RHBDF1 and iRhom2/RHBDF2. Interacts with FRMD8 via its interaction with iRhom1/RHBDF1 and iRhom2/RHBDF2. Interacts with TSPAN8. It depends on Zn(2+) as a cofactor. In terms of processing, the precursor is cleaved by a furin endopeptidase. Phosphorylated. Stimulation by growth factor or phorbol 12-myristate 13-acetate induces phosphorylation of Ser-822 but decreases phosphorylation of Ser-794. Phosphorylation at Thr-735 by MAPK14 is required for ADAM17-mediated ectodomain shedding.

It localises to the membrane. The enzyme catalyses Narrow endopeptidase specificity. Cleaves Pro-Leu-Ala-Gln-Ala-|-Val-Arg-Ser-Ser-Ser in the membrane-bound, 26-kDa form of tumor necrosis factor alpha (TNFalpha). Similarly cleaves other membrane-anchored, cell-surface proteins to 'shed' the extracellular domains.. Transmembrane metalloprotease which mediates the ectodomain shedding of a myriad of transmembrane proteins including adhesion proteins, growth factor precursors and cytokines important for inflammation and immunity. Cleaves the membrane-bound precursor of TNF-alpha to its mature soluble form. Responsible for the proteolytical release of soluble JAM3 from endothelial cells surface. Responsible for the proteolytic release of several other cell-surface proteins, including p75 TNF-receptor, interleukin 1 receptor type II, p55 TNF-receptor, transforming growth factor-alpha, L-selectin, growth hormone receptor, MUC1 and the amyloid precursor protein. Acts as an activator of Notch pathway by mediating cleavage of Notch, generating the membrane-associated intermediate fragment called Notch extracellular truncation (NEXT). Plays a role in the proteolytic processing of ACE2. Plays a role in hemostasis through shedding of GP1BA, the platelet glycoprotein Ib alpha chain. Mediates the proteolytic cleavage of LAG3, leading to release the secreted form of LAG3. Mediates the proteolytic cleavage of IL6R, leading to the release of secreted form of IL6R. Mediates the proteolytic cleavage and shedding of FCGR3A upon NK cell stimulation, a mechanism that allows for increased NK cell motility and detachment from opsonized target cells. Cleaves TREM2, resulting in shedding of the TREM2 ectodomain. In Rattus norvegicus (Rat), this protein is Disintegrin and metalloproteinase domain-containing protein 17 (Adam17).